A 246-amino-acid polypeptide reads, in one-letter code: MTTHQFEHPLNEKTRIYLRVEALLNQMERASTFSDGIQHQLFFRSLFDMLEIFEQIQLKSELAKDMEKQRLTYRSWLHVEGVDQEMLNSLLTEVDEVHRDLMSAERFGQSLKEDRFLSAIRQRFNLPGGSCCFDLPALHYWLHLPLDRKMRDAQQWMQTVTPLSNALKLWLKLTRETGHYRSRMASNGFYQSDAEDANILRLAIPLEYGVYPMISGHKNRFAIKFIDFHSGQACTQDIAFDLAVCC.

Belongs to the ZapD family. In terms of assembly, interacts with FtsZ.

The protein resides in the cytoplasm. Its function is as follows. Cell division factor that enhances FtsZ-ring assembly. Directly interacts with FtsZ and promotes bundling of FtsZ protofilaments, with a reduction in FtsZ GTPase activity. This is Cell division protein ZapD from Vibrio cholerae serotype O1 (strain ATCC 39541 / Classical Ogawa 395 / O395).